The following is a 1053-amino-acid chain: Ubiquitin-like modifier-activating enzyme 6 (1053 aa).

Methionine 1 carries the N-acetylmethionine modification. Arginine 46 lines the ATP pocket. A Phosphothreonine modification is found at threonine 54. Alanine 470 and aspartate 497 together coordinate ATP. Residues aspartate 499 and glutamate 502 each contribute to the Mg(2+) site. The ATP site is built by asparagine 505, arginine 508, glutamine 509, and lysine 521. The residue at position 544 (lysine 544) is an N6-acetyllysine. Residue valine 545 participates in ATP binding. Aspartate 569 is a binding site for Mg(2+). Asparagine 570 serves as a coordination point for ATP. Catalysis depends on cysteine 625, which acts as the Glycyl thioester intermediate. Position 729 is an N6-acetyllysine (lysine 729). Position 737 is a phosphoserine (serine 737).

It belongs to the ubiquitin-activating E1 family. As to quaternary structure, forms a thioester with UBD in cells stimulated with tumor necrosis factor-alpha (TNFa) and interferon-gamma (IFNg).

The enzyme catalyses ATP + ubiquitin + [E1 ubiquitin-activating enzyme]-L-cysteine = AMP + diphosphate + S-ubiquitinyl-[E1 ubiquitin-activating enzyme]-L-cysteine.. It participates in protein modification; protein ubiquitination. Functionally, activates ubiquitin by first adenylating its C-terminal glycine residue with ATP, and thereafter linking this residue to the side chain of a cysteine residue in E1, yielding a ubiquitin-E1 thioester and free AMP. Specific for ubiquitin, does not activate ubiquitin-like peptides. Also activates UBD/FAT10 conjugation via adenylation of its C-terminal glycine. Differs from UBE1 in its specificity for substrate E2 charging. Does not charge cell cycle E2s, such as CDC34. Essential for embryonic development. This chain is Ubiquitin-like modifier-activating enzyme 6 (Uba6), found in Mus musculus (Mouse).